A 1012-amino-acid chain; its full sequence is 5'-3' exoribonuclease 2 (1012 aa).

Residues 264-281 (GKCFLCGQEGHRAADCEG) form a CCHC-type zinc finger. Disordered stretches follow at residues 411–439 (VQQRQSERFRRDKARDKARDNARDNAQAS), 888–976 (TFKD…QRQV), and 990–1012 (QRKKEKYLRKKAKYAQGAPPKTA). Over residues 415 to 433 (QSERFRRDKARDKARDNAR) the composition is skewed to basic and acidic residues. The segment covering 904–914 (ITPKKMNSPQR) has biased composition (polar residues). Composition is skewed to basic and acidic residues over residues 918 to 928 (WKKDETPQSRE) and 950 to 962 (PQREFTREKKKEN). The span at 990–1002 (QRKKEKYLRKKAK) shows a compositional bias: basic residues.

Belongs to the 5'-3' exonuclease family. XRN2/RAT1 subfamily. Expressed in roots, leaves, stems and flowers.

It localises to the nucleus. Functionally, possesses 5'-&gt;3' exoribonuclease activity. Acts as an endogenous post-transcriptional gene silencing (PTGS) suppressor. Degrades miRNA-derived loops, excised during miRNA maturation in the nucleus. Involved in pre-rRNA processing. Involved in the primary exonucleolytic shortening of the 5' external transcribed spacer (5'ETS), required for endonucleolytic processing at site P by the U3 snoRNP complex. Involved with XRN3 in the 5'-end processing of 5.8S and 25S rRNAs. Contributes with XRN3 to polyadenylation-dependent nuclear RNA surveillance. Involved in the degradation of aberrant polyadenylated pre-rRNA through 5'-end processing. The chain is 5'-3' exoribonuclease 2 from Arabidopsis thaliana (Mouse-ear cress).